Reading from the N-terminus, the 237-residue chain is Ribitol-5-phosphate cytidylyltransferase (237 aa).

CTP contacts are provided by residues 7–10 (LAGG) and 80–86 (GEDRNET).

The protein belongs to the IspD/TarI cytidylyltransferase family. TarI subfamily.

The catalysed reaction is D-ribitol 5-phosphate + CTP + H(+) = CDP-L-ribitol + diphosphate. It functions in the pathway cell wall biogenesis; poly(ribitol phosphate) teichoic acid biosynthesis. In terms of biological role, catalyzes the transfer of the cytidylyl group of CTP to D-ribitol 5-phosphate. This chain is Ribitol-5-phosphate cytidylyltransferase, found in Listeria monocytogenes serotype 4b (strain F2365).